Here is a 254-residue protein sequence, read N- to C-terminus: 3-deoxy-manno-octulosonate cytidylyltransferase (254 aa).

Belongs to the KdsB family.

It localises to the cytoplasm. The enzyme catalyses 3-deoxy-alpha-D-manno-oct-2-ulosonate + CTP = CMP-3-deoxy-beta-D-manno-octulosonate + diphosphate. It participates in nucleotide-sugar biosynthesis; CMP-3-deoxy-D-manno-octulosonate biosynthesis; CMP-3-deoxy-D-manno-octulosonate from 3-deoxy-D-manno-octulosonate and CTP: step 1/1. Functionally, activates KDO (a required 8-carbon sugar) for incorporation into bacterial lipopolysaccharide in Gram-negative bacteria. The chain is 3-deoxy-manno-octulosonate cytidylyltransferase from Lawsonia intracellularis (strain PHE/MN1-00).